The sequence spans 99 residues: Nucleoid-associated protein SPy_1862/M5005_Spy1580 (99 aa).

This sequence belongs to the YbaB/EbfC family. As to quaternary structure, homodimer.

It localises to the cytoplasm. It is found in the nucleoid. Binds to DNA and alters its conformation. May be involved in regulation of gene expression, nucleoid organization and DNA protection. The protein is Nucleoid-associated protein SPy_1862/M5005_Spy1580 of Streptococcus pyogenes serotype M1.